The following is a 289-amino-acid chain: 4-diphosphocytidyl-2-C-methyl-D-erythritol kinase (289 aa).

Lys-10 is an active-site residue. 94–104 contacts ATP; that stretch reads PVAAGLAGGSS. Residue Asp-136 is part of the active site.

It belongs to the GHMP kinase family. IspE subfamily.

It catalyses the reaction 4-CDP-2-C-methyl-D-erythritol + ATP = 4-CDP-2-C-methyl-D-erythritol 2-phosphate + ADP + H(+). Its pathway is isoprenoid biosynthesis; isopentenyl diphosphate biosynthesis via DXP pathway; isopentenyl diphosphate from 1-deoxy-D-xylulose 5-phosphate: step 3/6. Catalyzes the phosphorylation of the position 2 hydroxy group of 4-diphosphocytidyl-2C-methyl-D-erythritol. The protein is 4-diphosphocytidyl-2-C-methyl-D-erythritol kinase of Bacillus pumilus (strain SAFR-032).